Reading from the N-terminus, the 488-residue chain is NAD-reducing hydrogenase HoxS subunit beta (488 aa).

Positions 62, 65, 458, and 461 each coordinate Ni(2+).

Belongs to the [NiFe]/[NiFeSe] hydrogenase large subunit family. As to quaternary structure, tetramer of an alpha and a gamma subunits (flavin-containing dimer), and a delta and a nickel-containing beta subunits (hydrogenase dimer). FMN is required as a cofactor. Ni(2+) serves as cofactor.

It localises to the cytoplasm. It catalyses the reaction H2 + NAD(+) = NADH + H(+). The sequence is that of NAD-reducing hydrogenase HoxS subunit beta (hoxH) from Cupriavidus necator (strain ATCC 17699 / DSM 428 / KCTC 22496 / NCIMB 10442 / H16 / Stanier 337) (Ralstonia eutropha).